The following is a 401-amino-acid chain: Argininosuccinate synthase (401 aa).

Position 8-16 (8-16 (AYSGGLDTS)) interacts with ATP. Y85 contributes to the L-citrulline binding site. G115 contacts ATP. Positions 117, 121, and 122 each coordinate L-aspartate. N121 lines the L-citrulline pocket. L-citrulline is bound by residues R125, S173, S182, E258, and Y270.

This sequence belongs to the argininosuccinate synthase family. Type 1 subfamily. As to quaternary structure, homotetramer.

The protein localises to the cytoplasm. The enzyme catalyses L-citrulline + L-aspartate + ATP = 2-(N(omega)-L-arginino)succinate + AMP + diphosphate + H(+). Its pathway is amino-acid biosynthesis; L-arginine biosynthesis; L-arginine from L-ornithine and carbamoyl phosphate: step 2/3. This is Argininosuccinate synthase from Staphylococcus saprophyticus subsp. saprophyticus (strain ATCC 15305 / DSM 20229 / NCIMB 8711 / NCTC 7292 / S-41).